The chain runs to 417 residues: Serine hydroxymethyltransferase (417 aa).

(6S)-5,6,7,8-tetrahydrofolate contacts are provided by residues Leu116 and Gly120–Leu122. N6-(pyridoxal phosphate)lysine is present on Lys225.

This sequence belongs to the SHMT family. In terms of assembly, homodimer. The cofactor is pyridoxal 5'-phosphate.

The protein localises to the cytoplasm. The catalysed reaction is (6R)-5,10-methylene-5,6,7,8-tetrahydrofolate + glycine + H2O = (6S)-5,6,7,8-tetrahydrofolate + L-serine. Its pathway is one-carbon metabolism; tetrahydrofolate interconversion. It participates in amino-acid biosynthesis; glycine biosynthesis; glycine from L-serine: step 1/1. Catalyzes the reversible interconversion of serine and glycine with tetrahydrofolate (THF) serving as the one-carbon carrier. This reaction serves as the major source of one-carbon groups required for the biosynthesis of purines, thymidylate, methionine, and other important biomolecules. Also exhibits THF-independent aldolase activity toward beta-hydroxyamino acids, producing glycine and aldehydes, via a retro-aldol mechanism. The sequence is that of Serine hydroxymethyltransferase from Hydrogenobaculum sp. (strain Y04AAS1).